A 308-amino-acid chain; its full sequence is UDP-N-acetylenolpyruvoylglucosamine reductase (308 aa).

In terms of domain architecture, FAD-binding PCMH-type spans 33 to 197; the sequence is TGGNADFYLS…LEASFNLAPG (165 aa). Arg-176 is an active-site residue. The Proton donor role is filled by Ser-226. The active site involves Glu-296.

It belongs to the MurB family. Requires FAD as cofactor.

It localises to the cytoplasm. It carries out the reaction UDP-N-acetyl-alpha-D-muramate + NADP(+) = UDP-N-acetyl-3-O-(1-carboxyvinyl)-alpha-D-glucosamine + NADPH + H(+). It functions in the pathway cell wall biogenesis; peptidoglycan biosynthesis. Cell wall formation. This Staphylococcus carnosus (strain TM300) protein is UDP-N-acetylenolpyruvoylglucosamine reductase.